Here is a 94-residue protein sequence, read N- to C-terminus: Large ribosomal subunit protein uL23 (94 aa).

Belongs to the universal ribosomal protein uL23 family. As to quaternary structure, part of the 50S ribosomal subunit. Contacts protein L29, and trigger factor when it is bound to the ribosome.

Its function is as follows. One of the early assembly proteins it binds 23S rRNA. One of the proteins that surrounds the polypeptide exit tunnel on the outside of the ribosome. Forms the main docking site for trigger factor binding to the ribosome. The sequence is that of Large ribosomal subunit protein uL23 from Dehalococcoides mccartyi (strain ATCC BAA-2100 / JCM 16839 / KCTC 5957 / BAV1).